The following is a 38-amino-acid chain: Potassium channel toxin alpha-KTx 2.13 (38 aa).

3 disulfides stabilise this stretch: cysteine 7–cysteine 29, cysteine 13–cysteine 34, and cysteine 17–cysteine 36.

This sequence belongs to the short scorpion toxin superfamily. Potassium channel inhibitor family. Alpha-KTx 02 subfamily. As to expression, expressed by the venom gland.

The protein resides in the secreted. In terms of biological role, selective inhibitor of voltage-gated potassium channels, blocks the Kv1.2/KCNA2 (Kd=1.3 nM) and Kv1.3/KCNA3 (Kd=7.2 nM) channels. Association and dissociation rates of the toxin are slower for Kv1.2/KCNA2 than for Kv1.3/KCNA3. This chain is Potassium channel toxin alpha-KTx 2.13, found in Centruroides suffusus (Durango bark scorpion).